The sequence spans 491 residues: UDP-glycosyltransferase 73C1 (491 aa).

UDP-alpha-D-glucose contacts are provided by residues S292, 352 to 354, 369 to 377, and 391 to 394; these read SPQ, HCGWNSTLE, and FGDQ.

The protein belongs to the UDP-glycosyltransferase family.

Its function is as follows. Involved in the O-glucosylation of trans-zeatin and dihydrozeatin. Also active in vitro on cis-zeatin, dihydrozeatin-9-N-Glc, and olomoucine. Can detoxify the explosive 2,4,6-trinitrotoluene in plant by forming O- or C-glucose conjugates. In Arabidopsis thaliana (Mouse-ear cress), this protein is UDP-glycosyltransferase 73C1 (UGT73C1).